A 368-amino-acid polypeptide reads, in one-letter code: 4-hydroxy-3-methylbut-2-en-1-yl diphosphate synthase (flavodoxin) (368 aa).

C271, C274, C306, and E313 together coordinate [4Fe-4S] cluster.

The protein belongs to the IspG family. The cofactor is [4Fe-4S] cluster.

The enzyme catalyses (2E)-4-hydroxy-3-methylbut-2-enyl diphosphate + oxidized [flavodoxin] + H2O + 2 H(+) = 2-C-methyl-D-erythritol 2,4-cyclic diphosphate + reduced [flavodoxin]. It participates in isoprenoid biosynthesis; isopentenyl diphosphate biosynthesis via DXP pathway; isopentenyl diphosphate from 1-deoxy-D-xylulose 5-phosphate: step 5/6. In terms of biological role, converts 2C-methyl-D-erythritol 2,4-cyclodiphosphate (ME-2,4cPP) into 1-hydroxy-2-methyl-2-(E)-butenyl 4-diphosphate. The polypeptide is 4-hydroxy-3-methylbut-2-en-1-yl diphosphate synthase (flavodoxin) (Buchnera aphidicola subsp. Acyrthosiphon pisum (strain APS) (Acyrthosiphon pisum symbiotic bacterium)).